A 251-amino-acid chain; its full sequence is CDP-diacylglycerol pyrophosphatase (251 aa).

Residues 4-24 (AGLLFLVMIVIAVVATGIGYW) traverse the membrane as a helical segment.

This sequence belongs to the Cdh family.

The protein localises to the cell inner membrane. It carries out the reaction a CDP-1,2-diacyl-sn-glycerol + H2O = a 1,2-diacyl-sn-glycero-3-phosphate + CMP + 2 H(+). It functions in the pathway phospholipid metabolism; CDP-diacylglycerol degradation; phosphatidate from CDP-diacylglycerol: step 1/1. This chain is CDP-diacylglycerol pyrophosphatase, found in Escherichia coli O45:K1 (strain S88 / ExPEC).